We begin with the raw amino-acid sequence, 76 residues long: Adipogenesis regulatory factor (76 aa).

As to expression, expressed in adipose tissue (at protein level). Highly expressed in omental and subcutaneous adipose tissues. Expressed in heart, cornea, liver, kidney and spleen.

The protein resides in the nucleus. In terms of biological role, plays a role in fat cell development; promotes adipogenic differentiation and stimulates transcription initiation of master adipogenesis factors like PPARG and CEBPA at early stages of preadipocyte differentiation. Its overexpression confers resistance to the anticancer chemotherapeutic drug cisplatin. The chain is Adipogenesis regulatory factor (ADIRF) from Homo sapiens (Human).